A 127-amino-acid chain; its full sequence is Large ribosomal subunit protein bL12 (127 aa).

It belongs to the bacterial ribosomal protein bL12 family. As to quaternary structure, homodimer. Part of the ribosomal stalk of the 50S ribosomal subunit. Forms a multimeric L10(L12)X complex, where L10 forms an elongated spine to which 2 to 4 L12 dimers bind in a sequential fashion. Binds GTP-bound translation factors.

In terms of biological role, forms part of the ribosomal stalk which helps the ribosome interact with GTP-bound translation factors. Is thus essential for accurate translation. The chain is Large ribosomal subunit protein bL12 from Streptomyces griseus subsp. griseus (strain JCM 4626 / CBS 651.72 / NBRC 13350 / KCC S-0626 / ISP 5235).